The following is a 479-amino-acid chain: Pre-glycoprotein polyprotein GP complex (479 aa).

A lipid anchor (N-myristoyl glycine; by host) is attached at Gly-2. Over 2-17 (GQLISFFQDIPIFFEE) the chain is Extracellular. The helical transmembrane segment at 18-32 (ALNVALAVVTLLAII) threads the bilayer. Lys-33 is a topological domain (cytoplasmic). The chain crosses the membrane as a helical span at residues 34 to 53 (GIVNVWKSGILQLFVFLVLA). Extracellular segments follow at residues 54–58 (GRSCS) and 59–418 (FKVG…TLVD). Zn(2+) is bound at residue Cys-57. Intrachain disulfides connect Cys-85/Cys-221, Cys-265/Cys-278, and Cys-287/Cys-296. N-linked (GlcNAc...) asparagine; by host glycosylation is found at Asn-88, Asn-125, Asn-174, Asn-202, and Asn-214. N-linked (GlcNAc...) asparagine; by host glycans are attached at residues Asn-314, Asn-351, Asn-359, Asn-376, and Asn-381. Cys-350 and Cys-371 are disulfide-bonded. The chain crosses the membrane as a helical span at residues 419–439 (LCFWSAIFFTTSLFLHLVGFP). Topologically, residues 440 to 479 (THRHIQGDPCPLPHRLDRNGACRCGRFQKLGKQVTWKRKH) are cytoplasmic. Zn(2+) contacts are provided by His-441, His-443, Cys-449, His-453, Cys-461, Cys-463, and His-479.

The protein belongs to the arenaviridae GPC protein family. As to quaternary structure, homotetramer; disulfide-linked. In terms of assembly, homotetramer. GP2 homotetramers bind through ionic interactions with GP1 homotetramers to form the GP complex together with the stable signal peptide. The GP-C polyprotein interacts with the host protease MBTPS1/SKI-1 resulting in the polyprotein processing. Specific enzymatic cleavages in vivo yield mature proteins. GP-C polyprotein is cleaved in the endoplasmic reticulum by the host protease MBTPS1. Only cleaved glycoprotein is incorporated into virions. Post-translationally, the SSP remains stably associated with the GP complex following cleavage by signal peptidase and plays crucial roles in the trafficking of GP through the secretory pathway. In terms of processing, myristoylation is necessary for GP2-mediated fusion activity.

The protein localises to the virion membrane. Its subcellular location is the host endoplasmic reticulum membrane. It is found in the host Golgi apparatus membrane. The protein resides in the host cell membrane. In terms of biological role, interacts with the host receptor. Mediates virus attachment to host TFRC. This attachment induces virion internalization predominantly through clathrin-mediated endocytosis. Its function is as follows. Class I viral fusion protein that directs fusion of viral and host endosomal membranes, leading to delivery of the nucleocapsid into the cytoplasm. Membrane fusion is mediated by irreversible conformational changes induced upon acidification in the endosome. Stable signal peptide (SSP): cleaved and functions as a signal peptide. In addition, it is also retained as the third component of the GP complex. The SSP is required for efficient glycoprotein expression, post-translational maturation cleavage of GP1 and GP2, glycoprotein transport to the cell surface plasma membrane, formation of infectious virus particles, and acid pH-dependent glycoprotein-mediated cell fusion. The protein is Pre-glycoprotein polyprotein GP complex of Homo sapiens (Human).